Here is a 386-residue protein sequence, read N- to C-terminus: Endonuclease III homolog 2, chloroplastic (386 aa).

A chloroplast-targeting transit peptide spans 1–50 (MILTGAASTFPIVARVLNAMNRRMYAATTLSSAKSISAESLNLRSDSNSE). Residues 44-66 (RSDSNSEAAHGASESETRVSLRK) form a disordered region. The HhH domain occupies 252–278 (YDGDIPRTLEELLSLPGVGPKIAHLVL). The active-site Nucleophile; for N-glycosylase activity is Lys-272. Residues Cys-347, Cys-354, Cys-357, and Cys-363 each contribute to the [4Fe-4S] cluster site.

It belongs to the Nth/MutY family. Requires [4Fe-4S] cluster as cofactor.

It localises to the plastid. The protein localises to the chloroplast stroma. Its subcellular location is the chloroplast nucleoid. The enzyme catalyses 2'-deoxyribonucleotide-(2'-deoxyribose 5'-phosphate)-2'-deoxyribonucleotide-DNA = a 3'-end 2'-deoxyribonucleotide-(2,3-dehydro-2,3-deoxyribose 5'-phosphate)-DNA + a 5'-end 5'-phospho-2'-deoxyribonucleoside-DNA + H(+). Functionally, bifunctional DNA N-glycosylase with associated apurinic/apyrimidinic (AP) lyase function that catalyzes the first step in base excision repair (BER), the primary repair pathway for the repair of oxidative DNA damage. The DNA N-glycosylase activity releases the damaged DNA base from DNA by cleaving the N-glycosidic bond, leaving an AP site. The AP lyase activity cleaves the phosphodiester bond 3' to the AP site by a beta-elimination. Primarily recognizes and repairs oxidative base damage of pyrimidines. This chain is Endonuclease III homolog 2, chloroplastic (NTH2), found in Arabidopsis thaliana (Mouse-ear cress).